The chain runs to 274 residues: NH(3)-dependent NAD(+) synthetase (274 aa).

Position 46–53 (46–53 (GISGGQDS)) interacts with ATP. Mg(2+) is bound at residue D52. R140 contacts deamido-NAD(+). Residue T160 participates in ATP binding. E165 provides a ligand contact to Mg(2+). Residues K173 and D180 each contribute to the deamido-NAD(+) site. ATP contacts are provided by K189 and T211. Residue 260-261 (HK) participates in deamido-NAD(+) binding.

Belongs to the NAD synthetase family. As to quaternary structure, homodimer.

The enzyme catalyses deamido-NAD(+) + NH4(+) + ATP = AMP + diphosphate + NAD(+) + H(+). Its pathway is cofactor biosynthesis; NAD(+) biosynthesis; NAD(+) from deamido-NAD(+) (ammonia route): step 1/1. Its function is as follows. Catalyzes the ATP-dependent amidation of deamido-NAD to form NAD. Uses ammonia as a nitrogen source. This Streptococcus pneumoniae (strain 70585) protein is NH(3)-dependent NAD(+) synthetase.